The sequence spans 227 residues: Esterase OVCA2 (227 aa).

The segment at 44 to 68 (GPHPVPDPPGPEGARSDFGSCPPEE) is disordered. Active-site charge relay system residues include serine 119, aspartate 179, and histidine 206.

The protein belongs to the LovG family. Proteolytically degraded in response to RA and 4HPR treatment in a time- and dose-dependent manner in the promyelocytic leukemia cell line HL-60. In terms of tissue distribution, ubiquitously expressed.

It carries out the reaction a carboxylic ester + H2O = an alcohol + a carboxylate + H(+). Its function is as follows. Exhibits ester hydrolase activity with a strong preference for long-chain alkyl ester substrates and high selectivity against a variety of short, branched, and substituted esters. Is able to hydrolyze ester bonds within a wide range of p-nitrophenyl derivatives (C2-C14) in vitro, with a strong preference toward substrates of &gt;8 carbons. The sequence is that of Esterase OVCA2 from Homo sapiens (Human).